The primary structure comprises 464 residues: MDGTEGSAGQPGPAERSHRSSVSSVGARAADVLVYLADDTVVPLAVENLPSLSAHELHRAVREVLQLPDIALDVFALWLVSPLLEVQLKPKHQPYKLGRQWPELLLRFTSAPDDDVAMDEPFLQFRRNVFFPKRRELQIHDEEVLRLLYEEAKGNVLAARYPCDVEDCEALGALVCRVQLGPYQPGRPAACDLREKLDSFLPAHLCKRGQSLFAALRGRGARAGPGEQGLLNAYRQVQEVSSDGGCEAALGTHYRAYLLKCHELPFYGCAFFHGEVDKPAQGFLHRGGRKPVSVAISLEGVHVIDSREKHVLLGLRFQELSWDHTSPEEEEPILWLEFDGDSEGTPVNKLLKIYSKQAELMSSLIEYCIELSQAAEPAGPQDSATGSPSDPSSSLAPVQRPKLRRQGSVVSSRIQHLSTIDYVEDGKGIRRVKPKRTTSFFSRQLSLGQGSYTVVQPGDSLEQG.

M1 bears the N-acetylmethionine mark. A disordered region spans residues 1-22 (MDGTEGSAGQPGPAERSHRSSV). Position 24 is a phosphoserine (S24). Residues 30 to 376 (ADVLVYLADD…YCIELSQAAE (347 aa)) form the FERM domain. Positions 376-408 (EPAGPQDSATGSPSDPSSSLAPVQRPKLRRQGS) are disordered. Residues S383, S387, and S408 each carry the phosphoserine modification. Residue T419 is modified to Phosphothreonine. Phosphoserine occurs at positions 439 and 446.

As to quaternary structure, interacts with iRhom1/RHBDF1 and iRhom2/RHBDF2 (via cytoplasmic N-termini); this interaction leads to mutual protein stabilization. Interacts with ADAM17; this interaction is indirect and mediated by iRhom proteins. Interacts with LRP6; this interaction affects LRP6-binding to AXIN1. In terms of tissue distribution, widely expressed, with high expression in heart and spleen.

The protein resides in the cytoplasm. It localises to the cytosol. It is found in the cell membrane. Promotes the cell surface stability of iRhom1/RHBDF1 and iRhom2/RHBDF2 and prevents their degradation via the endolysosomal pathway. By acting on iRhoms, involved in ADAM17-mediated shedding of TNF, amphiregulin/AREG, HBEGF and TGFA from the cell surface. Negatively regulates Wnt signaling, possibly by antagonizing the recruitment of AXIN1 to LRP6. The protein is FERM domain-containing protein 8 (FRMD8) of Homo sapiens (Human).